The sequence spans 346 residues: S-adenosylmethionine:tRNA ribosyltransferase-isomerase (346 aa).

This sequence belongs to the QueA family. As to quaternary structure, monomer.

The protein localises to the cytoplasm. The enzyme catalyses 7-aminomethyl-7-carbaguanosine(34) in tRNA + S-adenosyl-L-methionine = epoxyqueuosine(34) in tRNA + adenine + L-methionine + 2 H(+). The protein operates within tRNA modification; tRNA-queuosine biosynthesis. Its function is as follows. Transfers and isomerizes the ribose moiety from AdoMet to the 7-aminomethyl group of 7-deazaguanine (preQ1-tRNA) to give epoxyqueuosine (oQ-tRNA). This chain is S-adenosylmethionine:tRNA ribosyltransferase-isomerase, found in Lactococcus lactis subsp. cremoris (strain MG1363).